The sequence spans 675 residues: DNA ligase (675 aa).

NAD(+) is bound by residues 36 to 40, 85 to 86, and Glu118; these read DAVYD and SL. Lys120 (N6-AMP-lysine intermediate) is an active-site residue. Residues Arg141, Glu178, Lys298, and Lys322 each contribute to the NAD(+) site. Cys416, Cys419, Cys434, and Cys439 together coordinate Zn(2+). The 78-residue stretch at 598–675 folds into the BRCT domain; sequence TQPQTLSGKT…SEADLLALLQ (78 aa).

The protein belongs to the NAD-dependent DNA ligase family. LigA subfamily. Mg(2+) serves as cofactor. The cofactor is Mn(2+).

The catalysed reaction is NAD(+) + (deoxyribonucleotide)n-3'-hydroxyl + 5'-phospho-(deoxyribonucleotide)m = (deoxyribonucleotide)n+m + AMP + beta-nicotinamide D-nucleotide.. In terms of biological role, DNA ligase that catalyzes the formation of phosphodiester linkages between 5'-phosphoryl and 3'-hydroxyl groups in double-stranded DNA using NAD as a coenzyme and as the energy source for the reaction. It is essential for DNA replication and repair of damaged DNA. This is DNA ligase from Acaryochloris marina (strain MBIC 11017).